Here is a 556-residue protein sequence, read N- to C-terminus: Glypican-4 (556 aa).

A signal peptide spans Met1 to Ala18. Ser357 is subject to Phosphoserine. Residues Ser494, Ser498, and Ser500 are each glycosylated (O-linked (Xyl...) (glycosaminoglycan) serine). An N-linked (GlcNAc...) asparagine glycan is attached at Asn514. Residue Ser529 is the site of GPI-anchor amidated serine attachment. A propeptide spans Ala530–Arg556 (removed in mature form).

It belongs to the glypican family.

Its subcellular location is the cell membrane. The protein resides in the secreted. It localises to the extracellular space. Functionally, cell surface proteoglycan that bears heparan sulfate. May be involved in the development of kidney tubules and of the central nervous system. The polypeptide is Glypican-4 (GPC4) (Homo sapiens (Human)).